Reading from the N-terminus, the 467-residue chain is MGGSREEDRQHHNHLPSELPLGFRSSSPTTMIASSSMSKESSNYDMADFDQASLFLYLDSHDQQSIQEQRQTLNIFPSQPMHVADPAHEAKSAGVAMAMLPNGNQLQVLPSHPSKKPDQQGGQKINSSVPTNPPGPNLPLPNSAKDNKNSSLIKKEGSSSGKGATTSNDPEREGRRTLDPKTLRRLAQNREAARKSRLRKKAYIQQLESSRIRLSQLEQQVHVARVQGAMLGAGDQHQGLPSGPSAASLFDLEYGRWVEEHSKLIFQLRAALNEQMADSQLQVFVNGAMAQHDELLSLKGAIARADIFHLLCGVWATPAERCFLWLGGFRPSEAIKVMLKQVEPLSEGQLMSIYELQQAAKGTEDALSHAMDGLQQSLSDTVAAPDVAAAGGFMGHMSLAMNKISAMEDIVRQADGLRQQTLHKLQHMLTIRQAARCFVAISDYFHRLRALSTLWVARPRPEEGPAM.

A compositionally biased stretch (basic and acidic residues) spans 1 to 10; it reads MGGSREEDRQ. Disordered regions lie at residues 1-42 and 105-184; these read MGGS…KESS and QLQV…KTLR. Positions 25-41 are enriched in low complexity; sequence SSSPTTMIASSSMSKES. Polar residues predominate over residues 120–129; that stretch reads QGGQKINSSV. Over residues 145–157 the composition is skewed to basic and acidic residues; that stretch reads KDNKNSSLIKKEG. Polar residues predominate over residues 158–168; it reads SSSGKGATTSN. Positions 169–182 are enriched in basic and acidic residues; that stretch reads DPEREGRRTLDPKT. The 45-residue stretch at 179 to 223 folds into the bZIP domain; that stretch reads DPKTLRRLAQNREAARKSRLRKKAYIQQLESSRIRLSQLEQQVHV. Residues 181 to 201 form a basic motif region; it reads KTLRRLAQNREAARKSRLRKK. A leucine-zipper region spans residues 207 to 221; it reads LESSRIRLSQLEQQV. Positions 247–458 constitute a DOG1 domain; the sequence is ASLFDLEYGR…RALSTLWVAR (212 aa).

Belongs to the bZIP family. As to quaternary structure, interacts with NPR5/NH4, NH5.1 and NH5.2.

It is found in the nucleus. In terms of biological role, transcriptional regulator involved in defense response. The polypeptide is Transcription factor TGAL7 (Oryza sativa subsp. japonica (Rice)).